The primary structure comprises 117 residues: Large ribosomal subunit protein uL24 (117 aa).

It belongs to the universal ribosomal protein uL24 family. Part of the 50S ribosomal subunit.

Its function is as follows. One of two assembly initiator proteins, it binds directly to the 5'-end of the 23S rRNA, where it nucleates assembly of the 50S subunit. Functionally, located at the polypeptide exit tunnel on the outside of the subunit. This is Large ribosomal subunit protein uL24 from Methanothermobacter thermautotrophicus (strain ATCC 29096 / DSM 1053 / JCM 10044 / NBRC 100330 / Delta H) (Methanobacterium thermoautotrophicum).